A 229-amino-acid chain; its full sequence is 5'-methylthioadenosine/S-adenosylhomocysteine nucleosidase (229 aa).

The active-site Proton acceptor is the Glu-12. Residues Gly-78, Ile-152, and 173–174 (ME) contribute to the substrate site. Catalysis depends on Asp-197, which acts as the Proton donor.

It belongs to the PNP/UDP phosphorylase family. MtnN subfamily.

The enzyme catalyses S-adenosyl-L-homocysteine + H2O = S-(5-deoxy-D-ribos-5-yl)-L-homocysteine + adenine. The catalysed reaction is S-methyl-5'-thioadenosine + H2O = 5-(methylsulfanyl)-D-ribose + adenine. It catalyses the reaction 5'-deoxyadenosine + H2O = 5-deoxy-D-ribose + adenine. The protein operates within amino-acid biosynthesis; L-methionine biosynthesis via salvage pathway; S-methyl-5-thio-alpha-D-ribose 1-phosphate from S-methyl-5'-thioadenosine (hydrolase route): step 1/2. Catalyzes the irreversible cleavage of the glycosidic bond in both 5'-methylthioadenosine (MTA) and S-adenosylhomocysteine (SAH/AdoHcy) to adenine and the corresponding thioribose, 5'-methylthioribose and S-ribosylhomocysteine, respectively. Also cleaves 5'-deoxyadenosine, a toxic by-product of radical S-adenosylmethionine (SAM) enzymes, into 5-deoxyribose and adenine. In Histophilus somni (strain 2336) (Haemophilus somnus), this protein is 5'-methylthioadenosine/S-adenosylhomocysteine nucleosidase.